The sequence spans 351 residues: S-adenosylmethionine:tRNA ribosyltransferase-isomerase (351 aa).

Belongs to the QueA family. Monomer.

The protein localises to the cytoplasm. The enzyme catalyses 7-aminomethyl-7-carbaguanosine(34) in tRNA + S-adenosyl-L-methionine = epoxyqueuosine(34) in tRNA + adenine + L-methionine + 2 H(+). It participates in tRNA modification; tRNA-queuosine biosynthesis. Its function is as follows. Transfers and isomerizes the ribose moiety from AdoMet to the 7-aminomethyl group of 7-deazaguanine (preQ1-tRNA) to give epoxyqueuosine (oQ-tRNA). In Phocaeicola vulgatus (strain ATCC 8482 / DSM 1447 / JCM 5826 / CCUG 4940 / NBRC 14291 / NCTC 11154) (Bacteroides vulgatus), this protein is S-adenosylmethionine:tRNA ribosyltransferase-isomerase.